We begin with the raw amino-acid sequence, 333 residues long: DNA-directed RNA polymerase subunit alpha (333 aa).

Residues 1-235 (MQTNLLKPKA…EQLAVFAQLE (235 aa)) are alpha N-terminal domain (alpha-NTD). Positions 253 to 333 (FDPILLRPVD…NWPPQGLDKR (81 aa)) are alpha C-terminal domain (alpha-CTD).

This sequence belongs to the RNA polymerase alpha chain family. In terms of assembly, homodimer. The RNAP catalytic core consists of 2 alpha, 1 beta, 1 beta' and 1 omega subunit. When a sigma factor is associated with the core the holoenzyme is formed, which can initiate transcription.

It carries out the reaction RNA(n) + a ribonucleoside 5'-triphosphate = RNA(n+1) + diphosphate. In terms of biological role, DNA-dependent RNA polymerase catalyzes the transcription of DNA into RNA using the four ribonucleoside triphosphates as substrates. The sequence is that of DNA-directed RNA polymerase subunit alpha from Methylibium petroleiphilum (strain ATCC BAA-1232 / LMG 22953 / PM1).